A 348-amino-acid chain; its full sequence is Outer membrane protein A (348 aa).

Positions 1–21 are cleaved as a signal peptide; that stretch reads MKKTAIAIAVALAGFATVAQA. The next 8 beta stranded transmembrane spans lie at 27 to 37, 55 to 66, 70 to 78, 96 to 107, 112 to 120, 146 to 155, 160 to 167, and 186 to 194; these read TWYTGAKLGWS, QLGAGAFGGYQV, VGFEMGYDW, QGVQLTAKLGYP, LDIYTRLGG, PVFAGGVEYA, IATRLEYQ, and LLSLGVSYR. The segment at 201 to 210 is hinge-like; the sequence is APVVAPAPAP. Repeat copies occupy residues 205–206, 207–208, and 209–210. The segment at 205 to 210 is 3 X 2 AA tandem repeats of A-P; that stretch reads APAPAP. The OmpA-like domain occupies 212 to 340; that stretch reads VQTKHFTLKS…RVEIEVKGIK (129 aa). The cysteines at positions 313 and 325 are disulfide-linked.

Belongs to the outer membrane OOP (TC 1.B.6) superfamily. OmpA family. In terms of assembly, monomer and homodimer. (Microbial infection) Upon infection with phage Sf6 associates with the mature bacteriophage capsid. Was originally suggested to be within the bacteriophage capsid. This has been disproven.

It is found in the extracellular vesicle. The protein localises to the cell outer membrane. Its function is as follows. With TolR probably plays a role in maintaining the position of the peptidoglycan cell wall in the periplasm. Acts as a porin with low permeability that allows slow penetration of small solutes; an internal gate slows down solute passage. Required for conjugation with F-type plasmids; probably serves as the mating receptor on recipient cells. Functionally, (Microbial infection) Serves as a secondary receptor during phage Sf6 infection; infection requires both lipopolysaccharide (LPS) and the OmpA beta-barrel. The sequence is that of Outer membrane protein A from Shigella flexneri.